The following is a 99-amino-acid chain: UPF0473 protein LEUM_0559 (99 aa).

This sequence belongs to the UPF0473 family.

The polypeptide is UPF0473 protein LEUM_0559 (Leuconostoc mesenteroides subsp. mesenteroides (strain ATCC 8293 / DSM 20343 / BCRC 11652 / CCM 1803 / JCM 6124 / NCDO 523 / NBRC 100496 / NCIMB 8023 / NCTC 12954 / NRRL B-1118 / 37Y)).